We begin with the raw amino-acid sequence, 358 residues long: 3-dehydroquinate synthase (358 aa).

NAD(+) contacts are provided by residues 70–75 (DGEQFK), 104–108 (GVIGD), 128–129 (TT), Lys141, Lys150, and 168–171 (CLHT). Positions 183, 246, and 263 each coordinate Zn(2+).

The protein belongs to the sugar phosphate cyclases superfamily. Dehydroquinate synthase family. Requires Co(2+) as cofactor. The cofactor is Zn(2+). NAD(+) serves as cofactor.

The protein resides in the cytoplasm. The enzyme catalyses 7-phospho-2-dehydro-3-deoxy-D-arabino-heptonate = 3-dehydroquinate + phosphate. It participates in metabolic intermediate biosynthesis; chorismate biosynthesis; chorismate from D-erythrose 4-phosphate and phosphoenolpyruvate: step 2/7. Functionally, catalyzes the conversion of 3-deoxy-D-arabino-heptulosonate 7-phosphate (DAHP) to dehydroquinate (DHQ). The chain is 3-dehydroquinate synthase from Shewanella baltica (strain OS185).